A 251-amino-acid chain; its full sequence is Protein TK1472 (251 aa).

This sequence belongs to the CinA family.

In Thermococcus kodakarensis (strain ATCC BAA-918 / JCM 12380 / KOD1) (Pyrococcus kodakaraensis (strain KOD1)), this protein is Protein TK1472.